Reading from the N-terminus, the 366-residue chain is Acetylserotonin O-methyltransferase 2 (366 aa).

S-adenosyl-L-homocysteine contacts are provided by G209, D232, D253, and K267. The Proton acceptor role is filled by H271. Active-site residues include E302 and E332.

This sequence belongs to the class I-like SAM-binding methyltransferase superfamily. Cation-independent O-methyltransferase family. In terms of assembly, homodimer. As to expression, expressed in roots, leaves, stems and flowers.

The protein localises to the cytoplasm. It catalyses the reaction N-acetylserotonin + S-adenosyl-L-methionine = melatonin + S-adenosyl-L-homocysteine + H(+). The protein operates within aromatic compound metabolism; melatonin biosynthesis; melatonin from serotonin: step 1/2. In terms of biological role, methyltransferase which catalyzes the transfer of a methyl group onto N-acetylserotonin, producing melatonin (N-acetyl-5-methoxytryptamine). The chain is Acetylserotonin O-methyltransferase 2 from Oryza sativa subsp. japonica (Rice).